The sequence spans 82 residues: uncharacterized protein (82 aa).

The next 3 membrane-spanning stretches (helical) occupy residues 4 to 26 (LDIA…TCIC), 31 to 48 (LMPM…FTIF), and 52 to 74 (FLGW…LIVV).

The protein resides in the cell membrane. This is an uncharacterized protein from Bacillus subtilis (strain 168).